Consider the following 1279-residue polypeptide: ATP-dependent helicase/nuclease subunit A (1279 aa).

Positions Thr-4–Arg-499 constitute a UvrD-like helicase ATP-binding domain. Ala-25–Thr-32 contacts ATP. The UvrD-like helicase C-terminal domain occupies Glu-526 to Gly-853.

Belongs to the helicase family. AddA subfamily. In terms of assembly, heterodimer of AddA and AddB/RexB. The cofactor is Mg(2+).

The catalysed reaction is Couples ATP hydrolysis with the unwinding of duplex DNA by translocating in the 3'-5' direction.. The enzyme catalyses ATP + H2O = ADP + phosphate + H(+). Its function is as follows. The heterodimer acts as both an ATP-dependent DNA helicase and an ATP-dependent, dual-direction single-stranded exonuclease. Recognizes the chi site generating a DNA molecule suitable for the initiation of homologous recombination. The AddA nuclease domain is required for chi fragment generation; this subunit has the helicase and 3' -&gt; 5' nuclease activities. This chain is ATP-dependent helicase/nuclease subunit A, found in Clostridium botulinum (strain Kyoto / Type A2).